The primary structure comprises 471 residues: Light-independent protochlorophyllide reductase subunit N (471 aa).

Positions 22, 47, and 107 each coordinate [4Fe-4S] cluster.

It belongs to the BchN/ChlN family. In terms of assembly, protochlorophyllide reductase is composed of three subunits; ChlL, ChlN and ChlB. Forms a heterotetramer of two ChlB and two ChlN subunits. [4Fe-4S] cluster is required as a cofactor.

Its subcellular location is the plastid. The protein localises to the chloroplast. The enzyme catalyses chlorophyllide a + oxidized 2[4Fe-4S]-[ferredoxin] + 2 ADP + 2 phosphate = protochlorophyllide a + reduced 2[4Fe-4S]-[ferredoxin] + 2 ATP + 2 H2O. Its pathway is porphyrin-containing compound metabolism; chlorophyll biosynthesis (light-independent). Component of the dark-operative protochlorophyllide reductase (DPOR) that uses Mg-ATP and reduced ferredoxin to reduce ring D of protochlorophyllide (Pchlide) to form chlorophyllide a (Chlide). This reaction is light-independent. The NB-protein (ChlN-ChlB) is the catalytic component of the complex. The protein is Light-independent protochlorophyllide reductase subunit N of Huperzia lucidula (Shining clubmoss).